The primary structure comprises 672 residues: UvrABC system protein B (672 aa).

The region spanning 26–181 is the Helicase ATP-binding domain; that stretch reads AGLEDGLAYQ…ILQRLAELQY (156 aa). Residue 39-46 participates in ATP binding; sequence GVTGSGKT. Residues 92 to 115 carry the Beta-hairpin motif; it reads YYDYYQPEAYVPSSDTYIEKDASI. In terms of domain architecture, Helicase C-terminal spans 430-592; sequence QVDDLLSEIK…ITPKSIQKAV (163 aa). Residues 631–666 form the UVR domain; that stretch reads AKELRKLEEQMYHHARNLEFEEAAAVRDKIQHIRKG.

This sequence belongs to the UvrB family. In terms of assembly, forms a heterotetramer with UvrA during the search for lesions. Interacts with UvrC in an incision complex.

The protein resides in the cytoplasm. The UvrABC repair system catalyzes the recognition and processing of DNA lesions. A damage recognition complex composed of 2 UvrA and 2 UvrB subunits scans DNA for abnormalities. Upon binding of the UvrA(2)B(2) complex to a putative damaged site, the DNA wraps around one UvrB monomer. DNA wrap is dependent on ATP binding by UvrB and probably causes local melting of the DNA helix, facilitating insertion of UvrB beta-hairpin between the DNA strands. Then UvrB probes one DNA strand for the presence of a lesion. If a lesion is found the UvrA subunits dissociate and the UvrB-DNA preincision complex is formed. This complex is subsequently bound by UvrC and the second UvrB is released. If no lesion is found, the DNA wraps around the other UvrB subunit that will check the other stand for damage. This chain is UvrABC system protein B, found in Coxiella burnetii (strain CbuK_Q154) (Coxiella burnetii (strain Q154)).